We begin with the raw amino-acid sequence, 752 residues long: Cytosolic phospholipase A2 (752 aa).

The phospholipid binding stretch occupies residues 1–178 (MSFIDPYQHI…MKKLLGPKKS (178 aa)). Phosphoserine is present on Ser2. The C2 domain maps to 6–122 (PYQHIIVEHQ…KVGEKKEVPF (117 aa)). Residues Asp40, Thr41, Asp43, Asn65, Asp93, Ala94, and Asn95 each coordinate Ca(2+). A PLA2c domain is found at 140–740 (SCPDLRFSMA…SNVEARKFFN (601 aa)). Ser228 functions as the Nucleophile in the catalytic mechanism. A Phosphothreonine modification is found at Thr268. The interval 427–457 (KHIVSNDSSDSDDEAQGPKGTENEDAEREYQ) is disordered. Ser434, Ser435, and Ser437 each carry phosphoserine. Ser505 is subject to Phosphoserine; by MAPK. 2 positions are modified to phosphoserine: Ser511 and Ser515. Lys541 is covalently cross-linked (Glycyl lysine isopeptide (Lys-Gly) (interchain with G-Cter in SUMO2)). Asp549 (proton acceptor) is an active-site residue. Lys606 participates in a covalent cross-link: Glycyl lysine isopeptide (Lys-Gly) (interchain with G-Cter in SUMO2). Ser727 and Ser729 each carry phosphoserine.

Interacts with KAT5. In terms of processing, phosphorylated at both Ser-505 and Ser-727 in response to mitogenic stimuli. In terms of tissue distribution, in brain tissue, expressed in low levels in olfactory mitral and granule cells, in hippocampal pyramidal cells and in dentate and cerebellar granule cells.

The protein resides in the cytoplasm. The protein localises to the golgi apparatus membrane. It localises to the nucleus envelope. It catalyses the reaction a 1,2-diacyl-sn-glycero-3-phosphocholine + H2O = a 1-acyl-sn-glycero-3-phosphocholine + a fatty acid + H(+). The catalysed reaction is a 1-O-alkyl-2-acyl-sn-glycero-3-phosphocholine + H2O = a 1-O-alkyl-sn-glycero-3-phosphocholine + a fatty acid + H(+). The enzyme catalyses a 1-acyl-sn-glycero-3-phosphocholine + H2O = sn-glycerol 3-phosphocholine + a fatty acid + H(+). It carries out the reaction 1-hexadecanoyl-2-(5Z,8Z,11Z,14Z-eicosatetraenoyl)-sn-glycero-3-phosphocholine + H2O = 1-hexadecanoyl-sn-glycero-3-phosphocholine + (5Z,8Z,11Z,14Z)-eicosatetraenoate + H(+). It catalyses the reaction 1,2-di-(5Z,8Z,11Z,14Z-eicosatetraenoyl)-sn-glycero-3-phosphocholine + H2O = 1-(5Z,8Z,11Z,14Z-eicosatetraenoyl)-sn-glycero-3-phosphocholine + (5Z,8Z,11Z,14Z)-eicosatetraenoate + H(+). The catalysed reaction is 1-octadecanoyl-2-(5Z,8Z,11Z,14Z-eicosatetraenoyl)-sn-glycero-3-phosphocholine + H2O = 1-octadecanoyl-sn-glycero-3-phosphocholine + (5Z,8Z,11Z,14Z)-eicosatetraenoate + H(+). The enzyme catalyses 1-hexadecanoyl-2-(9Z,12Z-octadecadienoyl)-sn-glycero-3-phosphocholine + H2O = (9Z,12Z)-octadecadienoate + 1-hexadecanoyl-sn-glycero-3-phosphocholine + H(+). It carries out the reaction 1-octadecanoyl-2-(9Z,12Z,15Z-octadecatrienoyl)-sn-glycero-3-phosphocholine + H2O = (9Z,12Z,15Z)-octadecatrienoate + 1-octadecanoyl-sn-glycero-3-phosphocholine + H(+). It catalyses the reaction 1-(5Z,8Z,11Z,14Z-eicosatetraenoyl)-2-hexadecanoyl-sn-glycero-3-phosphocholine + H2O = 1-(5Z,8Z,11Z,14Z-eicosatetraenoyl)-sn-glycero-3-phosphocholine + hexadecanoate + H(+). The catalysed reaction is 1-O-hexadecyl-2-(5Z,8Z,11Z,14Z)-eicosatetraenoyl-sn-glycero-3-phosphocholine + H2O = 1-O-hexadecyl-sn-glycero-3-phosphocholine + (5Z,8Z,11Z,14Z)-eicosatetraenoate + H(+). The enzyme catalyses 1,2-di-(9Z-octadecenoyl)-sn-glycero-3-phospho-(1'-sn-glycerol) + H2O = 1-(9Z-octadecenoyl)-sn-glycero-3-phospho-(1'-sn-glycerol) + (9Z)-octadecenoate + H(+). It carries out the reaction 1-octadecanoyl-2-(5Z,8Z,11Z,14Z-eicosatetraenoyl)-sn-glycero-3-phosphate + H2O = 1-octadecanoyl-sn-glycero-3-phosphate + (5Z,8Z,11Z,14Z)-eicosatetraenoate + H(+). It catalyses the reaction 1-hexadecanoyl-sn-glycero-3-phosphocholine + H2O = sn-glycerol 3-phosphocholine + hexadecanoate + H(+). The catalysed reaction is 2-(prostaglandin E2)-sn-glycero-3-phosphoethanolamine + H2O = sn-glycero-3-phosphoethanolamine + prostaglandin E2 + H(+). The enzyme catalyses 2-[(15S)-hydroxy-(5Z,8Z,11Z,13E)-eicosatetraenoyl]-sn-glycero-3-phosphocholine + H2O = (15S)-hydroxy-(5Z,8Z,11Z,13E)-eicosatetraenoate + sn-glycerol 3-phosphocholine + H(+). It carries out the reaction 2-[(15R)-hydroxy-(5Z,8Z,11Z,13E)-eicosatetraenoyl]-sn-glycero-3-phosphocholine + H2O = (15R)-hydroxy-(5Z,8Z,11Z,13E)-eicosatetraenoate + sn-glycerol 3-phosphocholine + H(+). It catalyses the reaction 2-(prostaglandin E2)-sn-glycero-3-phosphocholine + H2O = prostaglandin E2 + sn-glycerol 3-phosphocholine + H(+). The catalysed reaction is 2-[(11R)-hydroxy-(5Z,8Z,12E,14Z)-eicosatetraenoyl]-sn-glycero-3-phosphocholine + H2O = (11R)-hydroxy-(5Z,8Z,12E,14Z)-eicosatetraenoate + sn-glycerol 3-phosphocholine + H(+). The enzyme catalyses 1-(5Z,8Z,11Z,14Z-eicosatetraenoyl)-2-O-hexadecyl-sn-glycero-3-phosphocholine + H2O = 2-O-hexadecyl-sn-glycero-3-phosphocholine + (5Z,8Z,11Z,14Z)-eicosatetraenoate + H(+). It carries out the reaction 1-octadecanoyl-2-(5Z,8Z,11Z,14Z-eicosatetraenoyl)-sn-glycero-3-phosphocholine + glycerol = 1-(5Z,8Z,11Z,14Z-eicosatetraenoyl)-glycerol + 1-octadecanoyl-sn-glycero-3-phosphocholine. It catalyses the reaction 1-octadecanoyl-2-(9Z,12Z,15Z-octadecatrienoyl)-sn-glycero-3-phosphocholine + glycerol = 1-(9Z,12Z,15Z-octadecatrienoyl)-glycerol + 1-octadecanoyl-sn-glycero-3-phosphocholine. The protein operates within lipid metabolism; arachidonate metabolism. It functions in the pathway membrane lipid metabolism; glycerophospholipid metabolism. It participates in lipid metabolism; prostaglandin biosynthesis. Its pathway is lipid metabolism; leukotriene B4 biosynthesis. With respect to regulation, activated by cytosolic calcium, which is necessary for binding to membrane lipids. Activated by phosphorylation in response to mitogenic stimuli. Its function is as follows. Has primarily calcium-dependent phospholipase and lysophospholipase activities, with a major role in membrane lipid remodeling and biosynthesis of lipid mediators of the inflammatory response. Plays an important role in embryo implantation and parturition through its ability to trigger prostanoid production. Preferentially hydrolyzes the ester bond of the fatty acyl group attached at sn-2 position of phospholipids (phospholipase A2 activity). Selectively hydrolyzes sn-2 arachidonoyl group from membrane phospholipids, providing the precursor for eicosanoid biosynthesis via the cyclooxygenase pathway. In an alternative pathway of eicosanoid biosynthesis, hydrolyzes sn-2 fatty acyl chain of eicosanoid lysophopholipids to release free bioactive eicosanoids. Hydrolyzes the ester bond of the fatty acyl group attached at sn-1 position of phospholipids (phospholipase A1 activity) only if an ether linkage rather than an ester linkage is present at the sn-2 position. This hydrolysis is not stereospecific. Has calcium-independent phospholipase A2 and lysophospholipase activities in the presence of phosphoinositides. Has O-acyltransferase activity. Catalyzes the transfer of fatty acyl chains from phospholipids to a primary hydroxyl group of glycerol (sn-1 or sn-3), potentially contributing to monoacylglycerol synthesis. This Rattus norvegicus (Rat) protein is Cytosolic phospholipase A2 (Pla2g4a).